Reading from the N-terminus, the 77-residue chain is Translation initiation factor IF-1, chloroplastic (77 aa).

An S1-like domain is found at 1-72 (MNKQGLFQME…TKGRIVYRQR (72 aa)).

This sequence belongs to the IF-1 family. As to quaternary structure, component of the 30S ribosomal translation pre-initiation complex which assembles on the 30S ribosome in the order IF-2 and IF-3, IF-1 and N-formylmethionyl-tRNA(fMet); mRNA recruitment can occur at any time during PIC assembly.

The protein resides in the plastid. Its subcellular location is the chloroplast. Its function is as follows. One of the essential components for the initiation of protein synthesis. Stabilizes the binding of IF-2 and IF-3 on the 30S subunit to which N-formylmethionyl-tRNA(fMet) subsequently binds. Helps modulate mRNA selection, yielding the 30S pre-initiation complex (PIC). Upon addition of the 50S ribosomal subunit IF-1, IF-2 and IF-3 are released leaving the mature 70S translation initiation complex. This chain is Translation initiation factor IF-1, chloroplastic, found in Nephroselmis olivacea (Green alga).